The primary structure comprises 522 residues: ATP synthase subunit alpha, mitochondrial (522 aa).

Residue 172-179 participates in ATP binding; the sequence is GDRQTGKT.

It belongs to the ATPase alpha/beta chains family. F-type ATPases have 2 components, CF(1) - the catalytic core - and CF(0) - the membrane proton channel. CF(1) has five subunits: alpha(3), beta(3), gamma(1), delta(1), epsilon(1). CF(0) has three main subunits: a, b and c.

The protein localises to the mitochondrion. It is found in the mitochondrion inner membrane. Mitochondrial membrane ATP synthase (F(1)F(0) ATP synthase or Complex V) produces ATP from ADP in the presence of a proton gradient across the membrane which is generated by electron transport complexes of the respiratory chain. F-type ATPases consist of two structural domains, F(1) - containing the extramembraneous catalytic core, and F(0) - containing the membrane proton channel, linked together by a central stalk and a peripheral stalk. During catalysis, ATP synthesis in the catalytic domain of F(1) is coupled via a rotary mechanism of the central stalk subunits to proton translocation. Subunits alpha and beta form the catalytic core in F(1). Rotation of the central stalk against the surrounding alpha(3)beta(3) subunits leads to hydrolysis of ATP in three separate catalytic sites on the beta subunits. Subunit alpha does not bear the catalytic high-affinity ATP-binding sites. The chain is ATP synthase subunit alpha, mitochondrial (ATP1) from Acanthamoeba castellanii (Amoeba).